A 139-amino-acid chain; its full sequence is Actin-depolymerizing factor 3 (139 aa).

An ADF-H domain is found at 5-139 (ASGMAVHDDC…DLDVFKSRAN (135 aa)). S6 carries the post-translational modification Phosphoserine.

Belongs to the actin-binding proteins ADF family.

It localises to the cytoplasm. It is found in the cytoskeleton. Its function is as follows. Actin-depolymerizing protein. Severs actin filaments (F-actin) and binds to actin monomers. The protein is Actin-depolymerizing factor 3 (ADF3) of Arabidopsis thaliana (Mouse-ear cress).